The primary structure comprises 458 residues: Ribosomal protein uS12 methylthiotransferase RimO (458 aa).

One can recognise an MTTase N-terminal domain in the interval 26–136; it reads PRIGMVSLGC…VLDAVHGAVP (111 aa). [4Fe-4S] cluster contacts are provided by cysteine 35, cysteine 71, cysteine 100, cysteine 167, cysteine 171, and cysteine 174. In terms of domain architecture, Radical SAM core spans 153–389; that stretch reads LTPRHYAYLK…MEKAQAISEA (237 aa). Residues 392 to 458 enclose the TRAM domain; sequence QAKVGRTMQV…SEYDLWGKLT (67 aa).

The protein belongs to the methylthiotransferase family. RimO subfamily. It depends on [4Fe-4S] cluster as a cofactor.

Its subcellular location is the cytoplasm. It carries out the reaction L-aspartate(89)-[ribosomal protein uS12]-hydrogen + (sulfur carrier)-SH + AH2 + 2 S-adenosyl-L-methionine = 3-methylsulfanyl-L-aspartate(89)-[ribosomal protein uS12]-hydrogen + (sulfur carrier)-H + 5'-deoxyadenosine + L-methionine + A + S-adenosyl-L-homocysteine + 2 H(+). Its function is as follows. Catalyzes the methylthiolation of an aspartic acid residue of ribosomal protein uS12. The polypeptide is Ribosomal protein uS12 methylthiotransferase RimO (Jannaschia sp. (strain CCS1)).